An 804-amino-acid chain; its full sequence is Phenylalanine--tRNA ligase beta subunit (804 aa).

The tRNA-binding domain occupies 38–148; the sequence is RAAFRAFTIA…ENAPVGTSFA (111 aa). Positions 401 to 476 constitute a B5 domain; the sequence is HTARVIDFPV…RIHGINRIDP (76 aa). Aspartate 454, aspartate 460, glutamate 463, and glutamate 464 together coordinate Mg(2+). One can recognise an FDX-ACB domain in the interval 710-803; the sequence is SLFQSLKRDY…VAKQTGGVLR (94 aa).

This sequence belongs to the phenylalanyl-tRNA synthetase beta subunit family. Type 1 subfamily. In terms of assembly, tetramer of two alpha and two beta subunits. Requires Mg(2+) as cofactor.

It is found in the cytoplasm. It catalyses the reaction tRNA(Phe) + L-phenylalanine + ATP = L-phenylalanyl-tRNA(Phe) + AMP + diphosphate + H(+). This Brucella suis biovar 1 (strain 1330) protein is Phenylalanine--tRNA ligase beta subunit.